A 143-amino-acid chain; its full sequence is uncharacterized protein (143 aa).

Cys-12 is an active-site residue.

Belongs to the ArsC family.

This is an uncharacterized protein from Rhodospirillum rubrum.